The following is a 315-amino-acid chain: ADP/ATP translocase 4 (315 aa).

At 1–19 (MHREPAKKKAEKRLFDASS) the chain is on the mitochondrial intermembrane side. A Solcar 1 repeat occupies 18 to 110 (SSFGKDLLAG…FAFKDKYKQL (93 aa)). The chain crosses the membrane as a helical span at residues 20–49 (FGKDLLAGGVAAAVSKTAVAPIERVKLLLQ). The Mitochondrial matrix segment spans residues 50–86 (VQASSKQISPEARYKGMVDCLVRIPREQGFFSFWRGN). Residues 87–111 (LANVIRYFPTQALNFAFKDKYKQLF) form a helical membrane-spanning segment. 2 residues coordinate ADP: arginine 92 and lysine 104. Topologically, residues 112–121 (MSGVNKEKQF) are mitochondrial intermembrane. Residues 122–142 (WRWFLANLASGGAAGATSLCV) traverse the membrane as a helical segment. 2 Solcar repeats span residues 123–213 (RWFL…VKGL) and 220–307 (TPFL…IKEF). Topologically, residues 143 to 190 (VYPLDFARTRLGVDIGKGPEERQFKGLGDCIMKIAKSDGIAGLYQGFG) are mitochondrial matrix. The helical transmembrane segment at 191 to 211 (VSVQGIIVYRASYFGAYDTVK) threads the bilayer. At 212–222 (GLLPKPKKTPF) the chain is on the mitochondrial intermembrane side. Residues 223-243 (LVSFFIAQVVTTCSGILSYPF) form a helical membrane-spanning segment. The Mitochondrial matrix portion of the chain corresponds to 244-283 (DTVRRRMMMQSGEAKRQYKGTLDCFVKIYQHEGISSFFRG). An ADP-binding site is contributed by arginine 247. Residues 247 to 252 (RRRMMM) form an important for transport activity region. Positions 247–252 (RRRMMM) match the Nucleotide carrier signature motif motif. Residues 284 to 301 (AFSNVLRGTGGALVLVLY) form a helical membrane-spanning segment. Residues 302-315 (DKIKEFFHIDIGGR) lie on the Mitochondrial intermembrane side of the membrane.

Belongs to the mitochondrial carrier (TC 2.A.29) family. In terms of assembly, monomer. As to expression, expressed in brain, liver, sperm and testis. In testis, expressed at higher level in spermatocytes, while it is expressed at lower level in spermatogonial cells. Expressed in erythrocytes (at protein level).

It localises to the mitochondrion inner membrane. Its subcellular location is the membrane. The protein localises to the cell projection. It is found in the cilium. The protein resides in the flagellum membrane. It carries out the reaction ADP(in) + ATP(out) = ADP(out) + ATP(in). The catalysed reaction is dATP(out) + ADP(in) = dATP(in) + ADP(out). It catalyses the reaction dADP(in) + ADP(out) = dADP(out) + ADP(in). The enzyme catalyses H(+)(in) = H(+)(out). Its activity is regulated as follows. The matrix-open state (m-state) is inhibited by the membrane-permeable bongkrekic acid (BKA). The cytoplasmic-open state (c-state) is inhibited by the membrane-impermeable toxic inhibitor carboxyatractyloside (CATR). Proton transporter activity is inhibited by ADP:ATP antiporter activity. Functionally, ADP:ATP antiporter that mediates import of ADP into the mitochondrial matrix for ATP synthesis, and export of ATP out to fuel the cell. Cycles between the cytoplasmic-open state (c-state) and the matrix-open state (m-state): operates by the alternating access mechanism with a single substrate-binding site intermittently exposed to either the cytosolic (c-state) or matrix (m-state) side of the inner mitochondrial membrane. Specifically required during spermatogenesis, probably to mediate ADP:ATP exchange in spermatocytes. Large ATP supplies from mitochondria may be critical for normal progression of spermatogenesis during early stages of meiotic prophase I, including DNA double-strand break repair and chromosomal synapsis. In addition to its ADP:ATP antiporter activity, also involved in mitochondrial uncoupling and mitochondrial permeability transition pore (mPTP) activity. Plays a role in mitochondrial uncoupling by acting as a proton transporter: proton transport uncouples the proton flows via the electron transport chain and ATP synthase to reduce the efficiency of ATP production and cause mitochondrial thermogenesis. Proton transporter activity is inhibited by ADP:ATP antiporter activity, suggesting that SLC25A31/ANT4 acts as a master regulator of mitochondrial energy output by maintaining a delicate balance between ATP production (ADP:ATP antiporter activity) and thermogenesis (proton transporter activity). Proton transporter activity requires free fatty acids as cofactor, but does not transport it. Among nucleotides, may also exchange ADP for dATP and dADP. Also plays a key role in mPTP opening, a non-specific pore that enables free passage of the mitochondrial membranes to solutes of up to 1.5 kDa, and which contributes to cell death. It is however unclear if SLC25A31/ANT4 constitutes a pore-forming component of mPTP or regulates it. This chain is ADP/ATP translocase 4, found in Homo sapiens (Human).